A 389-amino-acid chain; its full sequence is MGQNLSTSNPLGFFPDHQLDPAFRANTANPDWDFNPNKDTWPDANKVGAGAFGLGFTPPHGGLLGWSPQAQGIIQTLPANPPPASTNRQTGRQPTPLSPPLRNTHPQAMQWNSTTFHQTLQDPRVRGLYFPAGGSSSGTVNPVPTTASPISSIFSRIGDPALNMENITSGLLGPLLVLQAGFFLLTRILTIPQSLDSWWTSLNFLGGTTVCLGQNSQSPTSNHSPTSCPPTCPGYRWMCLRRFIIFLFILLLCLIFLLVLLDYQGMLPVCPLIPGSSTTSVGPCRTCTTTVQGTSMYPSCCCTKPSDGNCTCIPIPSSWAFGKFLWEWASARFSWLSLLVPFVQWFVGLSPTVWLSVIWMMWYWGPSLYRILSPFLPLLPIFFCLWVYI.

Residue methionine 1 is modified to N-acetylmethionine. Residue glycine 2 is the site of N-myristoyl glycine; by host attachment. A pre-S1 region spans residues 2–108 (GQNLSTSNPL…PPLRNTHPQA (107 aa)). Positions 2 to 163 (GQNLSTSNPL…FSRIGDPALN (162 aa)) are pre-S. Residues 2 to 170 (GQNLSTSNPL…ALNMENITSG (169 aa)) lie on the Virion surface; in external conformation side of the membrane. Residues 2–242 (GQNLSTSNPL…PGYRWMCLRR (241 aa)) lie on the Intravirion; in internal conformation side of the membrane. A disordered region spans residues 77–101 (LPANPPPASTNRQTGRQPTPLSPPL). The segment covering 85–95 (STNRQTGRQPT) has biased composition (polar residues). The segment at 109-163 (MQWNSTTFHQTLQDPRVRGLYFPAGGSSSGTVNPVPTTASPISSIFSRIGDPALN) is pre-S2. Residues 171-191 (LLGPLLVLQAGFFLLTRILTI) traverse the membrane as a helical segment. The Intravirion; in external conformation segment spans residues 192–242 (PQSLDSWWTSLNFLGGTTVCLGQNSQSPTSNHSPTSCPPTCPGYRWMCLRR). The chain crosses the membrane as a helical span at residues 243-263 (FIIFLFILLLCLIFLLVLLDY). Topologically, residues 264–337 (QGMLPVCPLI…WASARFSWLS (74 aa)) are virion surface. Asparagine 309 carries an N-linked (GlcNAc...) asparagine; by host glycan. The helical transmembrane segment at 338-358 (LLVPFVQWFVGLSPTVWLSVI) threads the bilayer. Over 359–364 (WMMWYW) the chain is Intravirion. Residues 365–387 (GPSLYRILSPFLPLLPIFFCLWV) form a helical membrane-spanning segment. Residues 388-389 (YI) are Virion surface-facing.

This sequence belongs to the orthohepadnavirus major surface antigen family. In terms of assembly, in its internal form (Li-HBsAg), interacts with the capsid protein and with the isoform S. Interacts with host chaperone CANX. As to quaternary structure, associates with host chaperone CANX through its pre-S2 N glycan; this association may be essential for isoform M proper secretion. Interacts with isoform L. Interacts with the antigens of satellite virus HDV (HDVAgs); this interaction is required for encapsidation of HDV genomic RNA. In terms of processing, isoform M is N-terminally acetylated by host at a ratio of 90%, and N-glycosylated by host at the pre-S2 region. Myristoylated.

Its subcellular location is the virion membrane. The large envelope protein exists in two topological conformations, one which is termed 'external' or Le-HBsAg and the other 'internal' or Li-HBsAg. In its external conformation the protein attaches the virus to cell receptors and thereby initiating infection. This interaction determines the species specificity and liver tropism. This attachment induces virion internalization predominantly through caveolin-mediated endocytosis. The large envelope protein also assures fusion between virion membrane and endosomal membrane. In its internal conformation the protein plays a role in virion morphogenesis and mediates the contact with the nucleocapsid like a matrix protein. Functionally, the middle envelope protein plays an important role in the budding of the virion. It is involved in the induction of budding in a nucleocapsid independent way. In this process the majority of envelope proteins bud to form subviral lipoprotein particles of 22 nm of diameter that do not contain a nucleocapsid. The chain is Large envelope protein from Hepatitis B virus genotype D (isolate Germany/1-91/1991) (HBV-D).